We begin with the raw amino-acid sequence, 428 residues long: ATP-dependent RNA helicase RhlB (428 aa).

A Q motif motif is present at residues 9–37; sequence QKFSDFALHPLVLEALEKKGFQHCTPIQA. One can recognise a Helicase ATP-binding domain in the interval 40–219; it reads LPLTLSGRDV…FEQMNNAEYV (180 aa). Residue 53-60 participates in ATP binding; that stretch reads AQTGTGKT. The DEAD box motif lies at 165–168; sequence DEAD. The 146-residue stretch at 245–390 folds into the Helicase C-terminal domain; sequence RLLQTLIEEE…VSKYNSDALL (146 aa). Residues 392-428 are disordered; that stretch reads DLPAPKRLARPRGGNGPRRNSAPRRGGAPRNNRKRSG. A compositionally biased stretch (low complexity) spans 408–421; the sequence is PRRNSAPRRGGAPR.

It belongs to the DEAD box helicase family. RhlB subfamily. As to quaternary structure, component of the RNA degradosome, which is a multiprotein complex involved in RNA processing and mRNA degradation.

It localises to the cytoplasm. It catalyses the reaction ATP + H2O = ADP + phosphate + H(+). Functionally, DEAD-box RNA helicase involved in RNA degradation. Has RNA-dependent ATPase activity and unwinds double-stranded RNA. The protein is ATP-dependent RNA helicase RhlB of Serratia proteamaculans (strain 568).